Reading from the N-terminus, the 144-residue chain is Large ribosomal subunit protein uL16 (144 aa).

It belongs to the universal ribosomal protein uL16 family. Part of the 50S ribosomal subunit.

Functionally, binds 23S rRNA and is also seen to make contacts with the A and possibly P site tRNAs. This is Large ribosomal subunit protein uL16 from Porphyromonas gingivalis (strain ATCC 33277 / DSM 20709 / CIP 103683 / JCM 12257 / NCTC 11834 / 2561).